The sequence spans 670 residues: MAMSDEAMFAPPQGITIEAVNGMLAERLAQKHGKASLLRAFIPLPPPFSPVQLIELHVLKSNFYYRYHDDGSDVTATTEYQGEMVDYSRHAVLLGSSGMAELRFIRTHGSRFTSQDCTLFNWLARIITPVLQSWLNDEEQQVALRLLEKDRDHHRVLVDITNAVLSHLDLDDLIADVAREIHHFFGLASVSMVLGDHRKNEKFSLWCSDLSASHCACLPRCMPGESVLLTQTLQTRQPTLTHRADDLFLWQRDPLLLLLASNGCESALLIPLTFGNHTPGALLLAHTSSTLFSEENCQLLQHIADRIAIAVGNADAWRSMTDLQESLQQENHQLSEQLLSNLGIGDIIYQSQAMEDLLQQVDIVAKSDSTVLICGETGTGKEVIARAIHQLSPRRDKPLVKINCAAIPASLLESELFGHDKGAFTGAINTHRGRFEIADGGTLFLDEIGDLPLELQPKLLRVLQEREIERLGGSRTIPVNVRVIAATNRDLWQMVEDRQFRSDLFYRLNVFPLELPPLRDRPEDIPLLAKHFTQKMARHMNRAIDAIPTEALRQLMSWDWPGNVRELENVIERAVLLTRGNSLNLHLNVRQSRLLPTLNEDSALRSSMAQLLHPTTPENDEEERQRIVQVLRETNGIVAGPRGAATRLGMKRTTLLSRMQRLGISVREVL.

The region spanning aspartate 169–valine 311 is the GAF domain. A Cys-rich segment, might bind a metal cluster motif is present at residues cysteine 207–cysteine 221. The Sigma-54 factor interaction domain occupies isoleucine 347–leucine 576. ATP contacts are provided by residues glycine 375–glutamate 382 and alanine 438–glutamate 447. The H-T-H motif DNA-binding region spans proline 641–glutamine 660.

Functionally, a transcriptional activator of its own operon; when overexpressed operon expression is strongly enhanced by low pH (under pH 6.0), strongly inhibited by O(2) but only weakly stimulated by fumarate. Expression in situ is very weak. The chain is DNA-binding transcriptional activator HyfR from Escherichia coli (strain K12).